The primary structure comprises 348 residues: D-alanine--D-alanine ligase (348 aa).

One can recognise an ATP-grasp domain in the interval 132–334 (KRVLESIGIP…YPDLIEELVT (203 aa)). Position 162–217 (162–217 (LARLTFPIFVKPANMGSSVGISKAQTKVELRKAIQLALTYDSRVLIEQGVVAREIE)) interacts with ATP. Residues D288, E301, and N303 each contribute to the Mg(2+) site.

The protein belongs to the D-alanine--D-alanine ligase family. Mg(2+) is required as a cofactor. It depends on Mn(2+) as a cofactor.

The protein localises to the cytoplasm. The catalysed reaction is 2 D-alanine + ATP = D-alanyl-D-alanine + ADP + phosphate + H(+). Its pathway is cell wall biogenesis; peptidoglycan biosynthesis. Functionally, cell wall formation. This Streptococcus pyogenes serotype M3 (strain SSI-1) protein is D-alanine--D-alanine ligase.